A 478-amino-acid polypeptide reads, in one-letter code: 3-ketoacyl-CoA synthase 3 (478 aa).

The N-terminal stretch at 1–25 (MDLLVMLLSLLVSYLIFKIWKRIDS) is a signal peptide. An FAE domain is found at 26–313 (KRDQNCYILD…FMLCLLLKKL (288 aa)). Residues C168, H247, H345, H349, H378, and N382 contribute to the active site.

Belongs to the thiolase-like superfamily. Chalcone/stilbene synthases family. As to expression, expressed in siliques, leaves, stems and seedlings.

It localises to the endoplasmic reticulum. The enzyme catalyses a very-long-chain acyl-CoA + malonyl-CoA + H(+) = a very-long-chain 3-oxoacyl-CoA + CO2 + CoA. The protein operates within lipid metabolism; fatty acid biosynthesis. This chain is 3-ketoacyl-CoA synthase 3, found in Arabidopsis thaliana (Mouse-ear cress).